The following is a 646-amino-acid chain: Epithelial sodium channel subunit beta-2 (646 aa).

Residues 1 to 57 (MIQGKLKRLKRYFTRALHRIQKGPGYTYKELLVWFCDNTNTHGPKRIIKEGPKKRVM) lie on the Cytoplasmic side of the membrane. A helical transmembrane segment spans residues 58 to 78 (WFILTLVFAGLVFWQWGLLIL). The Extracellular segment spans residues 79-551 (TYLSYGVSVS…GGQFGFWMGG (473 aa)). 8 cysteine pairs are disulfide-bonded: Cys104/Cys290, Cys214/Cys221, Cys267/Cys274, Cys380/Cys467, Cys405/Cys463, Cys409/Cys459, Cys418/Cys445, and Cys420/Cys434. Residues 552-572 (SVLCIIEFGEIIIDCMWITIL) form a helical membrane-spanning segment. Over 573–646 (KLLAWIRNRR…IEPVSSDEEN (74 aa)) the chain is Cytoplasmic. Residues 586-646 (QRPQYADPPP…IEPVSSDEEN (61 aa)) are disordered. A compositionally biased stretch (basic and acidic residues) spans 610 to 619 (QHDDGNHVTE).

This sequence belongs to the amiloride-sensitive sodium channel (TC 1.A.6) family. SCNN1B subfamily. In terms of assembly, component of the heterotrimeric epithelial sodium channel (ENaC) composed of an alpha/SCNN1A, a beta/SCNN1B and a gamma/SCNN1G subunit.

The protein localises to the apical cell membrane. It is found in the cytoplasmic vesicle membrane. It carries out the reaction Na(+)(in) = Na(+)(out). Originally identified and characterized by its inhibition by the diuretic drug amiloride. Functionally, this is one of the three pore-forming subunits of the heterotrimeric epithelial sodium channel (ENaC), a critical regulator of sodium balance and fluid homeostasis. ENaC operates in epithelial tissues, where it mediates the electrodiffusion of sodium ions from extracellular fluid through the apical membrane of cells, with water following osmotically. This Xenopus laevis (African clawed frog) protein is Epithelial sodium channel subunit beta-2 (scnn1b-b).